The primary structure comprises 141 residues: Nucleoside diphosphate kinase (141 aa).

ATP contacts are provided by K11, F59, R87, T93, R104, and N114. H117 serves as the catalytic Pros-phosphohistidine intermediate.

The protein belongs to the NDK family. In terms of assembly, homotetramer. Requires Mg(2+) as cofactor.

The protein localises to the cytoplasm. It catalyses the reaction a 2'-deoxyribonucleoside 5'-diphosphate + ATP = a 2'-deoxyribonucleoside 5'-triphosphate + ADP. The catalysed reaction is a ribonucleoside 5'-diphosphate + ATP = a ribonucleoside 5'-triphosphate + ADP. Major role in the synthesis of nucleoside triphosphates other than ATP. The ATP gamma phosphate is transferred to the NDP beta phosphate via a ping-pong mechanism, using a phosphorylated active-site intermediate. This chain is Nucleoside diphosphate kinase, found in Xylella fastidiosa (strain 9a5c).